Reading from the N-terminus, the 56-residue chain is UPF0391 membrane protein Jann_3570 (56 aa).

Helical transmembrane passes span 4-24 (WAVT…GGIA) and 29-48 (GIAQ…SLVA).

The protein belongs to the UPF0391 family.

Its subcellular location is the cell membrane. This Jannaschia sp. (strain CCS1) protein is UPF0391 membrane protein Jann_3570.